Reading from the N-terminus, the 558-residue chain is 2-hydroxy-7-methoxy-5-methyl-1-naphthoate--CoA ligase (558 aa).

Residues 212-213 (GG), 329-331 (ASR), valine 351, aspartate 435, arginine 450, and lysine 542 each bind ATP.

The protein belongs to the ATP-dependent AMP-binding enzyme family.

The catalysed reaction is 2-hydroxy-7-methoxy-5-methyl-1-naphthoate + ATP + CoA = 2-hydroxy-7-methoxy-5-methyl-1-naphthoyl-CoA + AMP + diphosphate. The protein operates within antibiotic biosynthesis. Its function is as follows. Catalyzes the activation of 2-hydroxy-7-methoxy-5-methyl-1-naphthoate in the biosynthesis of the naphthoate moiety of the neocarzinostatin chromophore. Also catalyzes the activation of other 1-naphthoic acid analogs such as 2-hydroxy-5-methyl-1-naphthoate or 2,7-dihydroxy-5-methyl-1-naphthoate in vitro. This is 2-hydroxy-7-methoxy-5-methyl-1-naphthoate--CoA ligase from Streptomyces carzinostaticus.